Consider the following 1261-residue polypeptide: Structural maintenance of chromosomes protein 3 (1261 aa).

Coiled coils occupy residues 188–332 (EKIQ…HSLQ) and 406–450 (LIAD…YEMD). An SMC hinge domain is found at 534–645 (NGYYGTVIEL…IIVRTLDQAA (112 aa)). Coiled-coil stretches lie at residues 677–826 (KRSK…MDLM), 857–930 (NERR…DKIT), and 1023–1085 (RELE…ENRK). The DA-box signature appears at 1159–1193 (LSGGQKSLVALAIIFSIQKCDPAPFYLFDEIDAAL).

It belongs to the SMC family. SMC3 subfamily. As to quaternary structure, component of the cohesin complex, composed of the smc-1 and smc-3 heterodimer attached via their SMC hinge domain, scc-1 which links them, and scc-3. Interacts with scc-1, smc-1 and tim-1.

It is found in the nucleus. The protein localises to the chromosome. Its function is as follows. Involved in chromosome cohesion during cell cycle and in DNA repair. Involved in the repair of double strand breaks during mitosis and meiosis. Required for chromosome segregation during mitosis. Central component of cohesin complex. The cohesin complex is required for the cohesion of sister chromatids after DNA replication. The cohesin complex apparently forms a large proteinaceous ring within which sister chromatids can be trapped. At anaphase, the complex is cleaved and dissociates from chromatin, allowing sister chromatids to segregate. Required for the localization of lab-1 to meiotic and mitotic chromosomes. In Caenorhabditis elegans, this protein is Structural maintenance of chromosomes protein 3.